Reading from the N-terminus, the 757-residue chain is Exo-alpha-(1-&gt;6)-L-arabinopyranosidase (757 aa).

Aspartate 232 is a catalytic residue.

It belongs to the glycosyl hydrolase 3 family. Homotetramer.

With respect to regulation, completely inhibited by Cu(2+) and Fe(2+). Functionally, catalyzes the hydrolysis of a non-reducing terminal alpha-L-arabinopyranosidic linkage in ginsenoside Rb2 (alpha-L-arabinopyranosyl-(1-&gt;6)-alpha-D-glucopyranosyl) to release alpha-D-glucopyranosyl (Rd). It is not able to hydrolyze alpha-L-arabinofuranosyl-(1-&gt;6)-alpha-D-glucopyranosyl (Rc). The protein is Exo-alpha-(1-&gt;6)-L-arabinopyranosidase of Bifidobacterium breve (strain ACS-071-V-Sch8b).